The following is a 298-amino-acid chain: ADP/ATP translocase 2 (298 aa).

Met-1 is modified (N-acetylmethionine). The Mitochondrial intermembrane portion of the chain corresponds to 1–7 (MTDAAVS). Residue Thr-2 is modified to N-acetylthreonine; in ADP/ATP translocase 2, N-terminally processed. Residues 6–98 (VSFAKDFLAG…FAFKDKYKQI (93 aa)) form a Solcar 1 repeat. Ser-7 carries the phosphoserine modification. The helical transmembrane segment at 8 to 37 (FAKDFLAGGVAAAISKTAVAPIERVKLLLQ) threads the bilayer. At Lys-23 the chain carries N6-malonyllysine. Residues 38 to 74 (VQHASKQITADKQYKGIIDCVVRIPKEQGVLSFWRGN) lie on the Mitochondrial matrix side of the membrane. Residue Lys-43 is modified to N6-succinyllysine. Lys-52 carries the N6,N6,N6-trimethyllysine; alternate modification. The residue at position 52 (Lys-52) is an N6,N6-dimethyllysine; alternate. Position 52 is an N6-methyllysine; alternate (Lys-52). Residues 75-99 (LANVIRYFPTQALNFAFKDKYKQIF) form a helical membrane-spanning segment. Residues Arg-80 and Lys-92 each coordinate ADP. 2 positions are modified to N6-malonyllysine: Lys-92 and Lys-96. Residues 100–109 (LGGVDKRTQF) are Mitochondrial intermembrane-facing. Lys-105 is subject to N6-acetyllysine; alternate. N6-succinyllysine; alternate is present on Lys-105. A helical transmembrane segment spans residues 110–130 (WRYFAGNLASGGAAGATSLCF). 2 Solcar repeats span residues 111 to 201 (RYFA…AKGM) and 212 to 297 (ISWM…IKKY). Over 131 to 178 (VYPLDFARTRLAADVGKAGAEREFKGLGDCLVKIYKSDGIKGLYQGFN) the chain is Mitochondrial matrix. Lys-147 bears the N6-methyllysine; alternate mark. 2 positions are modified to N6-acetyllysine; alternate: Lys-147 and Lys-155. Lys-147 and Lys-155 each carry N6-succinyllysine; alternate. N6-malonyllysine; alternate is present on Lys-147. N6-acetyllysine occurs at positions 163 and 166. A helical membrane pass occupies residues 179–199 (VSVQGIIIYRAAYFGIYDTAK). The Mitochondrial intermembrane portion of the chain corresponds to 200–210 (GMLPDPKNTHI). The helical transmembrane segment at 211–231 (FISWMIAQSVTAVAGLTSYPF) threads the bilayer. At 232–273 (DTVRRRMMMQSGRKGTDIMYTGTLDCWRKIARDEGGKAFFKG) the chain is on the mitochondrial matrix side. Arg-235 is an ADP binding site. Residues 235–240 (RRRMMM) are important for transport activity. A Nucleotide carrier signature motif motif is present at residues 235–240 (RRRMMM). An N6-acetyllysine; alternate modification is found at Lys-268. The residue at position 268 (Lys-268) is an N6-succinyllysine; alternate. A helical membrane pass occupies residues 274–291 (AWSNVLRGMGGAFVLVLY). Topologically, residues 292–298 (DEIKKYT) are mitochondrial intermembrane.

It belongs to the mitochondrial carrier (TC 2.A.29) family. Monomer. Component of the MMXD complex, which includes CIAO1, ERCC2, CIAO2B, MMS19 and SLC25A5/ANT2. Interacts with AK4. Interacts with TIMM44; leading to inhibit the presequence translocase TIMM23, thereby promoting stabilization of PINK1. In terms of processing, trimethylated by ANTKMT at Lys-52. As to expression, present in kidney, brain, heart, liver and skeletal muscle.

It localises to the mitochondrion inner membrane. Its subcellular location is the membrane. The catalysed reaction is ADP(in) + ATP(out) = ADP(out) + ATP(in). It carries out the reaction H(+)(in) = H(+)(out). The matrix-open state (m-state) is inhibited by the membrane-permeable bongkrekic acid (BKA). The cytoplasmic-open state (c-state) is inhibited by the membrane-impermeable toxic inhibitor carboxyatractyloside (CATR). Proton transporter activity is inhibited by ADP:ATP antiporter activity. Functionally, ADP:ATP antiporter that mediates import of ADP into the mitochondrial matrix for ATP synthesis, and export of ATP out to fuel the cell. Cycles between the cytoplasmic-open state (c-state) and the matrix-open state (m-state): operates by the alternating access mechanism with a single substrate-binding site intermittently exposed to either the cytosolic (c-state) or matrix (m-state) side of the inner mitochondrial membrane. In addition to its ADP:ATP antiporter activity, also involved in mitochondrial uncoupling and mitochondrial permeability transition pore (mPTP) activity. Plays a role in mitochondrial uncoupling by acting as a proton transporter: proton transport uncouples the proton flows via the electron transport chain and ATP synthase to reduce the efficiency of ATP production and cause mitochondrial thermogenesis. Proton transporter activity is inhibited by ADP:ATP antiporter activity, suggesting that SLC25A5/ANT2 acts as a master regulator of mitochondrial energy output by maintaining a delicate balance between ATP production (ADP:ATP antiporter activity) and thermogenesis (proton transporter activity). Proton transporter activity requires free fatty acids as cofactor, but does not transport it. Probably mediates mitochondrial uncoupling in tissues that do not express UCP1. Also plays a key role in mPTP opening, a non-specific pore that enables free passage of the mitochondrial membranes to solutes of up to 1.5 kDa, and which contributes to cell death. It is however unclear if SLC25A5/ANT2 constitutes a pore-forming component of mPTP or regulates it. Acts as a regulator of mitophagy independently of ADP:ATP antiporter activity: promotes mitophagy via interaction with TIMM44, leading to inhibit the presequence translocase TIMM23, thereby promoting stabilization of PINK1. As part of the mitotic spindle-associated MMXD complex it may play a role in chromosome segregation. The chain is ADP/ATP translocase 2 from Rattus norvegicus (Rat).